Reading from the N-terminus, the 190-residue chain is Holliday junction branch migration complex subunit RuvA (190 aa).

The interval 1-64 (MIGKLTGTLL…EDAQLLYGFG (64 aa)) is domain I. Residues 65-143 (THSERQAFRE…ADTGAQSLFV (79 aa)) form a domain II region. Residues 144 to 148 (NNDQN) are flexible linker. The interval 148–190 (NDIVQALMALGYSDKDAAAALKKLPPDVGVTEGIKLALKALAK) is domain III.

This sequence belongs to the RuvA family. As to quaternary structure, homotetramer. Forms an RuvA(8)-RuvB(12)-Holliday junction (HJ) complex. HJ DNA is sandwiched between 2 RuvA tetramers; dsDNA enters through RuvA and exits via RuvB. An RuvB hexamer assembles on each DNA strand where it exits the tetramer. Each RuvB hexamer is contacted by two RuvA subunits (via domain III) on 2 adjacent RuvB subunits; this complex drives branch migration. In the full resolvosome a probable DNA-RuvA(4)-RuvB(12)-RuvC(2) complex forms which resolves the HJ.

It localises to the cytoplasm. The RuvA-RuvB-RuvC complex processes Holliday junction (HJ) DNA during genetic recombination and DNA repair, while the RuvA-RuvB complex plays an important role in the rescue of blocked DNA replication forks via replication fork reversal (RFR). RuvA specifically binds to HJ cruciform DNA, conferring on it an open structure. The RuvB hexamer acts as an ATP-dependent pump, pulling dsDNA into and through the RuvAB complex. HJ branch migration allows RuvC to scan DNA until it finds its consensus sequence, where it cleaves and resolves the cruciform DNA. This chain is Holliday junction branch migration complex subunit RuvA, found in Delftia acidovorans (strain DSM 14801 / SPH-1).